The chain runs to 323 residues: MNALPPAIFLMGPTAAGKTDLAIELTKVLPCELISVDSALVYRGMDIGTAKPSKTQLAEHPHRLIDILDPAQSYSAADFRSDALAAMAEITARGNIPLLVGGTMLYFKALLDGLADMPAADAQVRAQLEADAQAFGWQALHDQLAVVDPVSAARIHPNDPQRLIRALEVYRVSGMSMTAHREQQTAQSTEAAASGRQQLPYTVANLAIAPADRKVLHQRIALRFEQMLDQGFLDEVLALRSRGDLHSGLPSIRAVGYRQVWDHLDGKLTRDEMQERGIIATRQLAKRQFTWLRSWDDLHWLDSLASDNLSRALKYLGSVSILS.

An ATP-binding site is contributed by 12–19 (GPTAAGKT). Substrate is bound at residue 14–19 (TAAGKT). Interaction with substrate tRNA stretches follow at residues 37-40 (DSAL) and 161-165 (QRLIR).

Belongs to the IPP transferase family. As to quaternary structure, monomer. Mg(2+) serves as cofactor.

It carries out the reaction adenosine(37) in tRNA + dimethylallyl diphosphate = N(6)-dimethylallyladenosine(37) in tRNA + diphosphate. Functionally, catalyzes the transfer of a dimethylallyl group onto the adenine at position 37 in tRNAs that read codons beginning with uridine, leading to the formation of N6-(dimethylallyl)adenosine (i(6)A). The sequence is that of tRNA dimethylallyltransferase from Pseudomonas syringae pv. syringae (strain B728a).